Consider the following 312-residue polypeptide: Phosphate system positive regulatory protein PHO4 (312 aa).

The interval 1–31 (MGRTTSEGIHGFVDDLEPKSSILDKVGDFIT) is interaction with PHO80. Residues 35–71 (KRHDGREDFNEQNDELNSQENHNSSENGNENENEQDS) form a disordered region. The segment covering 49-62 (ELNSQENHNSSENG) has biased composition (low complexity). The short motif at 75–83 (DDLDRAFEL) is the 9aaTAD element. Residues 75 to 99 (DDLDRAFELVEGMDMDWMMPSHAHH) form a transcription activation domain region. 4 positions are modified to phosphoserine; by PHO85: Ser100, Ser114, Ser128, and Ser152. Polar residues-rich tracts occupy residues 138 to 154 (TTSANKVTKNKSNSSPY) and 196 to 210 (PSNSTRRVSPVTAKT). The segment at 138–259 (TTSANKVTKN…DKRESHKHAE (122 aa)) is disordered. The Nuclear localization signal signature appears at 140–166 (SANKVTKNKSNSSPYLNKRRGKPGPDS). The interaction with PHO80 stretch occupies residues 156-200 (NKRRGKPGPDSATSLFELPDSVIPTPKPKPKPKQYPKVILPSNST). Residues 201 to 218 (RRVSPVTAKTSSSAEGVV) are interaction with PHO2. The involved in oligomerization stretch occupies residues 203–227 (VSPVTAKTSSSAEGVVVASESPVIA). Ser204 bears the Phosphoserine mark. Positions 211-235 (SSSAEGVVVASESPVIAPHGSSHSR) are enriched in low complexity. Position 223 is a phosphoserine; by PHO85 (Ser223). Phosphoserine occurs at positions 242 and 243. Basic and acidic residues predominate over residues 248-259 (DDDKRESHKHAE). The region spanning 250–306 (DKRESHKHAEQARRNRLAVALHELASLIPAEWKQQNVSAAPSKATTVEAACRYIRHL) is the bHLH domain.

In terms of assembly, binds DNA as a homodimer. Interacts with transcription factor PHO2 and binds cooperatively to PHO5 UAS. Interacts with the cyclin-CDK PHO80-PHO85 and the CDK inhibitor (CKI) PHO81. Phosphorylated by the cyclin-CDK PHO80-PHO85 at five residues under high-phosphate conditions, preventing PHO4 from activating the structural PHO genes. Phosphorylation of Ser-114 and Ser-128 promotes nuclear export. Phosphorylation of Ser-152 decreases nuclear import. Phosphorylation of Ser-223 decreases the binding affinity for PHO2.

It is found in the cytoplasm. The protein localises to the nucleus. In terms of biological role, transcriptional activator that regulates the expression of repressible phosphatase under phosphate starvation conditions. Binds to the upstream activating sequence (UAS) of several phosphatase encoding PHO genes. Inhibited by the cyclin-CDK PHO80-PHO85 under high-phosphate conditions. This Saccharomyces cerevisiae (strain ATCC 204508 / S288c) (Baker's yeast) protein is Phosphate system positive regulatory protein PHO4 (PHO4).